Consider the following 53-residue polypeptide: Metallocarboxypeptidase inhibitor b (53 aa).

Intrachain disulfides connect C9–C23, C15–C51, and C27–C38. A53 is a binding site for Zn(2+).

Metallocarboxypeptidase inhibitor. Has an inhibitory effect on bovine CPA1 and porcine CPB1. Does not inhibit D.melanogaster svr (carboxypeptidase D). Shows no activity against serine proteases subtilisin or bovine trypsin, cysteine protease papain, and aspartyl protease porcine pepsin. This chain is Metallocarboxypeptidase inhibitor b, found in Nerita versicolor (Four-tooth nerite).